The following is a 297-amino-acid chain: Large ribosomal subunit protein uL15m (297 aa).

The transit peptide at 1 to 22 directs the protein to the mitochondrion; it reads MAGPVRGAAGPWALDLLRALPR. Residues 27–68 form a disordered region; that stretch reads NLRPNPGSRKPERRRRGQRRGRKCGRGHKGERQRGTRPRLGF. Positions 37-53 are enriched in basic residues; that stretch reads PERRRRGQRRGRKCGRG.

It belongs to the universal ribosomal protein uL15 family. Component of the mitochondrial ribosome large subunit (39S) which comprises a 16S rRNA and about 50 distinct proteins.

The protein localises to the mitochondrion. This Bos taurus (Bovine) protein is Large ribosomal subunit protein uL15m (MRPL15).